Reading from the N-terminus, the 295-residue chain is Acetyl-coenzyme A carboxylase carboxyl transferase subunit beta (295 aa).

The interval methionine 1–lysine 20 is disordered. Positions leucine 28–alanine 295 constitute a CoA carboxyltransferase N-terminal domain. 4 residues coordinate Zn(2+): cysteine 32, cysteine 35, cysteine 51, and cysteine 54. Residues cysteine 32–cysteine 54 form a C4-type zinc finger.

It belongs to the AccD/PCCB family. Acetyl-CoA carboxylase is a heterohexamer composed of biotin carboxyl carrier protein (AccB), biotin carboxylase (AccC) and two subunits each of ACCase subunit alpha (AccA) and ACCase subunit beta (AccD). The cofactor is Zn(2+).

The protein resides in the cytoplasm. It catalyses the reaction N(6)-carboxybiotinyl-L-lysyl-[protein] + acetyl-CoA = N(6)-biotinyl-L-lysyl-[protein] + malonyl-CoA. Its pathway is lipid metabolism; malonyl-CoA biosynthesis; malonyl-CoA from acetyl-CoA: step 1/1. Functionally, component of the acetyl coenzyme A carboxylase (ACC) complex. Biotin carboxylase (BC) catalyzes the carboxylation of biotin on its carrier protein (BCCP) and then the CO(2) group is transferred by the transcarboxylase to acetyl-CoA to form malonyl-CoA. This Xanthomonas axonopodis pv. citri (strain 306) protein is Acetyl-coenzyme A carboxylase carboxyl transferase subunit beta.